The sequence spans 161 residues: MTTPAQDAPLVFPSVAFRPVRLFFINVGLAAVAMLVAGVFGHLTVGMFLGLGLLLGLLNALLVRRSAESITAKEHPLKRSMALNSASRLAIITILGLIIAYIFRPAGLGVVFGLAFFQVLLVATTALPVLKKLRTATEEPVATYSSNGQTGGSEGRSASDD.

4 helical membrane passes run 22–42, 43–63, 89–109, and 110–130; these read LFFI…VFGH, LTVG…ALLV, LAII…AGLG, and VVFG…LPVL. The segment at 141–161 is disordered; sequence VATYSSNGQTGGSEGRSASDD.

The protein to M.leprae ML1138.

It localises to the cell membrane. This is an uncharacterized protein from Mycobacterium bovis (strain ATCC BAA-935 / AF2122/97).